Consider the following 351-residue polypeptide: Small ribosomal subunit biogenesis GTPase RsgA (351 aa).

Residues 107 to 277 form the CP-type G domain; it reads ENLLQRPDNF…LIDSPGIREF (171 aa). GTP-binding positions include 163-166 and 219-227; these read NKTD and GQSGVGKSS. Positions 301, 306, 308, and 314 each coordinate Zn(2+).

Belongs to the TRAFAC class YlqF/YawG GTPase family. RsgA subfamily. As to quaternary structure, monomer. Associates with 30S ribosomal subunit, binds 16S rRNA. Zn(2+) is required as a cofactor.

The protein localises to the cytoplasm. One of several proteins that assist in the late maturation steps of the functional core of the 30S ribosomal subunit. Helps release RbfA from mature subunits. May play a role in the assembly of ribosomal proteins into the subunit. Circularly permuted GTPase that catalyzes slow GTP hydrolysis, GTPase activity is stimulated by the 30S ribosomal subunit. The protein is Small ribosomal subunit biogenesis GTPase RsgA of Marinobacter nauticus (strain ATCC 700491 / DSM 11845 / VT8) (Marinobacter aquaeolei).